A 722-amino-acid polypeptide reads, in one-letter code: Dynein axonemal intermediate chain 7 (722 aa).

The segment covering 1-15 (MGPKAKKSGSKKKKV) has biased composition (basic residues). The disordered stretch occupies residues 1–20 (MGPKAKKSGSKKKKVTKAER).

This sequence belongs to the DNAI7 family. Part of the multisubunit axonemal dynein complex formed at least of two heavy chains and a number of intermediate and light chains. Associates with tubulin. Interacts with microtubule. Ubiquitinated. Ubiquitination leads to its degradation through the 26S proteasome. Ubiquitin-proteasome-mediated DNAI7 degradation occurs in mitosis.

It is found in the cell projection. Its subcellular location is the cilium. The protein resides in the cytoplasm. Functionally, via its association with the multisubunit axonemal dynein complex, is potentially involved in the regulation of cilia function. May act as a cell cycle regulator. The protein is Dynein axonemal intermediate chain 7 of Macaca fascicularis (Crab-eating macaque).